A 194-amino-acid polypeptide reads, in one-letter code: uncharacterized protein (194 aa).

Residues 1-20 (MLYKFTVLLLIYSYLRNLQA) form the signal peptide. N-linked (GlcNAc...) asparagine; by host glycans are attached at residues asparagine 31, asparagine 72, asparagine 133, and asparagine 157.

This is an uncharacterized protein from Ostreid herpesvirus 1 (isolate France) (OsHV-1).